The sequence spans 205 residues: Small ribosomal subunit protein uS4 (205 aa).

In terms of domain architecture, S4 RNA-binding spans 94–172 (SRLDSIVYRM…TTPDYVSFDV (79 aa)).

This sequence belongs to the universal ribosomal protein uS4 family. Part of the 30S ribosomal subunit. Contacts protein S5. The interaction surface between S4 and S5 is involved in control of translational fidelity.

Its function is as follows. One of the primary rRNA binding proteins, it binds directly to 16S rRNA where it nucleates assembly of the body of the 30S subunit. With S5 and S12 plays an important role in translational accuracy. The chain is Small ribosomal subunit protein uS4 from Rickettsia bellii (strain OSU 85-389).